A 135-amino-acid chain; its full sequence is Large ribosomal subunit protein uL22 (135 aa).

This sequence belongs to the universal ribosomal protein uL22 family. As to quaternary structure, part of the 50S ribosomal subunit.

This protein binds specifically to 23S rRNA; its binding is stimulated by other ribosomal proteins, e.g. L4, L17, and L20. It is important during the early stages of 50S assembly. It makes multiple contacts with different domains of the 23S rRNA in the assembled 50S subunit and ribosome. Functionally, the globular domain of the protein is located near the polypeptide exit tunnel on the outside of the subunit, while an extended beta-hairpin is found that lines the wall of the exit tunnel in the center of the 70S ribosome. The protein is Large ribosomal subunit protein uL22 of Christiangramia forsetii (strain DSM 17595 / CGMCC 1.15422 / KT0803) (Gramella forsetii).